Consider the following 306-residue polypeptide: Acetyl-coenzyme A carboxylase carboxyl transferase subunit beta (306 aa).

In terms of domain architecture, CoA carboxyltransferase N-terminal spans 25–294 (LWIKDPTSGE…VVTPSPPSPT (270 aa)). Residues 284 to 306 (AVVTPSPPSPTDSQTSLSKTKAA) form a disordered region.

This sequence belongs to the AccD/PCCB family. As to quaternary structure, acetyl-CoA carboxylase is a heterohexamer composed of biotin carboxyl carrier protein (AccB), biotin carboxylase (AccC) and two subunits each of ACCase subunit alpha (AccA) and ACCase subunit beta (AccD).

It localises to the cytoplasm. It carries out the reaction N(6)-carboxybiotinyl-L-lysyl-[protein] + acetyl-CoA = N(6)-biotinyl-L-lysyl-[protein] + malonyl-CoA. The protein operates within lipid metabolism; malonyl-CoA biosynthesis; malonyl-CoA from acetyl-CoA: step 1/1. Component of the acetyl coenzyme A carboxylase (ACC) complex. Biotin carboxylase (BC) catalyzes the carboxylation of biotin on its carrier protein (BCCP) and then the CO(2) group is transferred by the transcarboxylase to acetyl-CoA to form malonyl-CoA. The polypeptide is Acetyl-coenzyme A carboxylase carboxyl transferase subunit beta (Bartonella tribocorum (strain CIP 105476 / IBS 506)).